Consider the following 127-residue polypeptide: Aspartate 1-decarboxylase (127 aa).

Catalysis depends on Ser25, which acts as the Schiff-base intermediate with substrate; via pyruvic acid. The residue at position 25 (Ser25) is a Pyruvic acid (Ser). A substrate-binding site is contributed by Thr57. Tyr58 serves as the catalytic Proton donor. Residue 73–75 coordinates substrate; the sequence is GAA.

The protein belongs to the PanD family. As to quaternary structure, heterooctamer of four alpha and four beta subunits. The cofactor is pyruvate. Is synthesized initially as an inactive proenzyme, which is activated by self-cleavage at a specific serine bond to produce a beta-subunit with a hydroxyl group at its C-terminus and an alpha-subunit with a pyruvoyl group at its N-terminus.

Its subcellular location is the cytoplasm. The enzyme catalyses L-aspartate + H(+) = beta-alanine + CO2. Its pathway is cofactor biosynthesis; (R)-pantothenate biosynthesis; beta-alanine from L-aspartate: step 1/1. In terms of biological role, catalyzes the pyruvoyl-dependent decarboxylation of aspartate to produce beta-alanine. The protein is Aspartate 1-decarboxylase of Listeria welshimeri serovar 6b (strain ATCC 35897 / DSM 20650 / CCUG 15529 / CIP 8149 / NCTC 11857 / SLCC 5334 / V8).